Reading from the N-terminus, the 212-residue chain is Methylthioribulose-1-phosphate dehydratase (212 aa).

Residues H97 and H99 each contribute to the Zn(2+) site.

The protein belongs to the aldolase class II family. MtnB subfamily. In terms of assembly, homotetramer. Zn(2+) serves as cofactor.

The enzyme catalyses 5-(methylsulfanyl)-D-ribulose 1-phosphate = 5-methylsulfanyl-2,3-dioxopentyl phosphate + H2O. It participates in amino-acid biosynthesis; L-methionine biosynthesis via salvage pathway; L-methionine from S-methyl-5-thio-alpha-D-ribose 1-phosphate: step 2/6. Functionally, catalyzes the dehydration of methylthioribulose-1-phosphate (MTRu-1-P) into 2,3-diketo-5-methylthiopentyl-1-phosphate (DK-MTP-1-P). This chain is Methylthioribulose-1-phosphate dehydratase, found in Bacillus cereus (strain B4264).